Reading from the N-terminus, the 394-residue chain is Uroporphyrinogen decarboxylase 2, chloroplastic (394 aa).

Substrate is bound by residues 74–78, F93, S123, D124, Y201, S256, and H371; that span reads RQAGR.

It belongs to the uroporphyrinogen decarboxylase family. Homodimer.

Its subcellular location is the plastid. The protein localises to the chloroplast. It carries out the reaction uroporphyrinogen III + 4 H(+) = coproporphyrinogen III + 4 CO2. It participates in porphyrin-containing compound metabolism; protoporphyrin-IX biosynthesis; coproporphyrinogen-III from 5-aminolevulinate: step 4/4. It functions in the pathway porphyrin-containing compound metabolism; chlorophyll biosynthesis. Its function is as follows. Catalyzes the decarboxylation of four acetate groups of uroporphyrinogen-III to yield coproporphyrinogen-III. The polypeptide is Uroporphyrinogen decarboxylase 2, chloroplastic (HEME2) (Arabidopsis thaliana (Mouse-ear cress)).